The primary structure comprises 620 residues: Acetylcholinesterase 1 (620 aa).

The signal sequence occupies residues 1–31 (MRYSLLFFIFLPCVITAVDLIHLHDGSPLFG). The N-linked (GlcNAc...) asparagine glycan is linked to Asn-74. Cys-82 and Cys-109 are oxidised to a cystine. Catalysis depends on Ser-216, which acts as the Acyl-ester intermediate. An intrachain disulfide couples Cys-270 to Cys-286. Asn-272 is a glycosylation site (N-linked (GlcNAc...) asparagine). Active-site charge relay system residues include Glu-346 and His-468. Cys-430 and Cys-558 form a disulfide bridge. N-linked (GlcNAc...) asparagine glycosylation is found at Asn-486 and Asn-536.

This sequence belongs to the type-B carboxylesterase/lipase family. Oligomer composed of disulfide-linked homodimers.

The protein localises to the synapse. Its subcellular location is the secreted. The protein resides in the cell membrane. It catalyses the reaction acetylcholine + H2O = choline + acetate + H(+). Rapidly hydrolyzes choline released into the synapse. The chain is Acetylcholinesterase 1 (ace-1) from Caenorhabditis briggsae.